Reading from the N-terminus, the 260-residue chain is Lys-63-specific deubiquitinase BRCC36 (260 aa).

In terms of domain architecture, MPN spans 6–149 (VHLESDAFLV…YTCFQSVQAQ (144 aa)). 3 residues coordinate Zn(2+): histidine 92, histidine 94, and aspartate 105. The JAMM motif signature appears at 92–105 (HSHPHITVWPSHVD).

This sequence belongs to the peptidase M67A family. BRCC36 subfamily. In terms of assembly, component of the BRCA1-A complex, at least composed of brca1, bard1, uimc1/rap80, abraxas1, brcc3/brcc36, babam2 and babam1/nba1. In the BRCA1-A complex, interacts directly with abraxas1 and babam2. Component of the BRISC complex, at least composed of abraxas2, brcc3/brcc36, babam2 and babam1/nba1. Within the complex, interacts directly with abraxas2. Both the BRCA1-A complex and the BRISC complex bind polyubiquitin. Requires Zn(2+) as cofactor.

It localises to the nucleus. It is found in the cytoplasm. The protein localises to the cytoskeleton. The protein resides in the spindle pole. In terms of biological role, metalloprotease that specifically cleaves 'Lys-63'-linked polyubiquitin chains. Does not have activity toward 'Lys-48'-linked polyubiquitin chains. Component of the BRCA1-A complex, a complex that specifically recognizes 'Lys-63'-linked ubiquitinated histones H2A and H2AX at DNA lesions sites, leading to target the brca1-bard1 heterodimer to sites of DNA damage at double-strand breaks (DSBs). In the BRCA1-A complex, it specifically removes 'Lys-63'-linked ubiquitin on histones H2A and H2AX, antagonizing the rnf8-dependent ubiquitination at double-strand breaks (DSBs). Catalytic subunit of the BRISC complex, a multiprotein complex that specifically cleaves 'Lys-63'-linked ubiquitin in various substrates. Mediates the specific 'Lys-63'-specific deubiquitination associated with the COP9 signalosome complex (CSN), via the interaction of the BRISC complex with the CSN complex. The BRISC complex is required for normal mitotic spindle assembly and microtubule attachment to kinetochores via its role in deubiquitinating numa1. Plays a role in interferon signaling via its role in the deubiquitination of the interferon receptor ifnar1; deubiquitination increases ifnar1 activity by enhancing its stability and cell surface expression. Acts as a regulator of the NLRP3 inflammasome by mediating deubiquitination of nlrp3. Down-regulates the response to bacterial lipopolysaccharide (LPS) via its role in ifnar1 deubiquitination. The chain is Lys-63-specific deubiquitinase BRCC36 (brcc3) from Salmo salar (Atlantic salmon).